Reading from the N-terminus, the 243-residue chain is Voltage-gated monoatomic cation channel TMEM109 (243 aa).

The N-terminal stretch at 1 to 33 (MAGAHSNPSWSRHLFKAVLMVLGALLLVHSASA) is a signal peptide. The Lumenal segment spans residues 34 to 83 (QTHREFASPGQQKRESSADILTEIGRSLKETLDTWLGPETMHVISETLLQ). Residues 84 to 104 (VMWAISSAISVACFALSGIAA) form a helical membrane-spanning segment. The Cytoplasmic portion of the chain corresponds to 105–135 (QLLSALGLDGEQLTQVLKLSPSQVQTLLLWG). A helical membrane pass occupies residues 136–156 (AAALVIYWLLSLLLGLVLALL). Residues 157–185 (GRILGGLKLVLFVAGFVGLVRSVPDPSTR) lie on the Lumenal side of the membrane. Residues 186-205 (ALLLLALLTVFALLSRLTGS) traverse the membrane as a helical segment. Residues 206–243 (RSSGTHLEAKVRGLERQIEELRGRQRRAAKIPRSMEEE) lie on the Cytoplasmic side of the membrane.

Homooligomer. Interacts with CRYAB; in the cellular response to DNA damage.

It localises to the nucleus outer membrane. The protein localises to the endoplasmic reticulum membrane. Its subcellular location is the sarcoplasmic reticulum membrane. It catalyses the reaction K(+)(in) = K(+)(out). It carries out the reaction Ca(2+)(in) = Ca(2+)(out). Functions as a voltage-gated monoatomic cation channel permeable to both potassium and calcium. Plays a role in the cellular response to DNA damage. The chain is Voltage-gated monoatomic cation channel TMEM109 from Rattus norvegicus (Rat).